We begin with the raw amino-acid sequence, 401 residues long: Acetate kinase (401 aa).

Residue Asn7 participates in Mg(2+) binding. Lys14 serves as a coordination point for ATP. Arg96 is a binding site for substrate. Asp153 acts as the Proton donor/acceptor in catalysis. ATP is bound by residues 212–216 (HLGNG), 287–289 (DMR), and 335–339 (GIGEN). Glu388 lines the Mg(2+) pocket.

The protein belongs to the acetokinase family. Homodimer. Requires Mg(2+) as cofactor. It depends on Mn(2+) as a cofactor.

It localises to the cytoplasm. The catalysed reaction is acetate + ATP = acetyl phosphate + ADP. It functions in the pathway metabolic intermediate biosynthesis; acetyl-CoA biosynthesis; acetyl-CoA from acetate: step 1/2. In terms of biological role, catalyzes the formation of acetyl phosphate from acetate and ATP. Can also catalyze the reverse reaction. This is Acetate kinase from Microcystis aeruginosa (strain NIES-843 / IAM M-2473).